Reading from the N-terminus, the 192-residue chain is Small ribosomal subunit protein uS5 (192 aa).

An S5 DRBM domain is found at 20-83; it reads FVDRLVHINR…EAAKRGLIRV (64 aa). A disordered region spans residues 165-192; it reads ARRGLKVSALQARRRDAEPGSADSADAA.

This sequence belongs to the universal ribosomal protein uS5 family. As to quaternary structure, part of the 30S ribosomal subunit. Contacts proteins S4 and S8.

Its function is as follows. With S4 and S12 plays an important role in translational accuracy. Functionally, located at the back of the 30S subunit body where it stabilizes the conformation of the head with respect to the body. This chain is Small ribosomal subunit protein uS5, found in Methylobacterium sp. (strain 4-46).